Reading from the N-terminus, the 300-residue chain is Glycine--tRNA ligase alpha subunit (300 aa).

Belongs to the class-II aminoacyl-tRNA synthetase family. In terms of assembly, tetramer of two alpha and two beta subunits.

The protein resides in the cytoplasm. The enzyme catalyses tRNA(Gly) + glycine + ATP = glycyl-tRNA(Gly) + AMP + diphosphate. In Pseudoalteromonas translucida (strain TAC 125), this protein is Glycine--tRNA ligase alpha subunit.